Consider the following 168-residue polypeptide: UPF0178 protein RBAM_023530 (168 aa).

It belongs to the UPF0178 family.

The sequence is that of UPF0178 protein RBAM_023530 from Bacillus velezensis (strain DSM 23117 / BGSC 10A6 / LMG 26770 / FZB42) (Bacillus amyloliquefaciens subsp. plantarum).